The sequence spans 143 residues: Transcriptional regulator MraZ (143 aa).

SpoVT-AbrB domains follow at residues 6 to 49 (TYNH…NEAE) and 78 to 121 (SDET…DLKV).

The protein belongs to the MraZ family. Forms oligomers.

The protein localises to the cytoplasm. It localises to the nucleoid. The polypeptide is Transcriptional regulator MraZ (Spiroplasma kunkelii).